Consider the following 151-residue polypeptide: Large ribosomal subunit protein bL9 (151 aa).

The protein belongs to the bacterial ribosomal protein bL9 family.

In terms of biological role, binds to the 23S rRNA. This chain is Large ribosomal subunit protein bL9, found in Desulfotalea psychrophila (strain LSv54 / DSM 12343).